The following is a 744-amino-acid chain: C-type polyheme cytochrome OmcB (744 aa).

The signal sequence occupies residues 1–23 (MSRKVTKYSAVLAVSLFAAALAG). The N-palmitoyl cysteine moiety is linked to residue Cys24. A lipid anchor (S-diacylglycerol cysteine) is attached at Cys24. 36 residues coordinate heme c: Cys48, Cys51, His52, Cys81, Cys84, His85, Cys107, Cys110, His111, Cys141, Cys144, His145, Cys185, Cys188, His189, Cys225, Cys228, His229, Cys303, Cys306, His307, Cys382, Cys385, His386, Cys430, Cys433, His434, Cys480, Cys483, His484, Cys555, Cys558, His559, Cys587, Cys590, and His591.

Binds 12 heme c groups per subunit.

The protein localises to the cell outer membrane. Functionally, involved in anaerobic respiration with Fe(3+) as terminal electron acceptor. Acts as an electron-transport mediator in the dissimilatory reduction of Fe(3+). This is C-type polyheme cytochrome OmcB (omcB) from Geobacter sulfurreducens (strain DL-1 / KN400).